The chain runs to 89 residues: Dynein light chain 2, cytoplasmic (89 aa).

This sequence belongs to the dynein light chain family.

The protein localises to the cytoplasm. It localises to the cytoskeleton. Functionally, acts as a non-catalytic accessory component of a dynein complex. The protein is Dynein light chain 2, cytoplasmic (Cdlc2) of Drosophila melanogaster (Fruit fly).